A 489-amino-acid polypeptide reads, in one-letter code: EGF-like domain-containing protein 2 (489 aa).

An N-terminal signal peptide occupies residues 1 to 23 (MMQTLLRGLCVVVLFWGYIKASA). The 37-residue stretch at 73-109 (PATLCDPPCLNGGQCFEPTADTYMCMCSEAFYGSQCE) folds into the EGF-like domain. Intrachain disulfides connect cysteine 77–cysteine 87, cysteine 81–cysteine 97, and cysteine 99–cysteine 108. Positions 116 to 370 (ECSGDQITIN…GSCPTPAPPA (255 aa)) constitute a ZP domain. The N-linked (GlcNAc...) asparagine glycan is linked to asparagine 229. Disordered stretches follow at residues 358 to 389 (CEPG…AASD) and 404 to 425 (RSNE…QNAD). Over residues 363-374 (CPTPAPPAPVQP) the composition is skewed to pro residues. Over residues 404-420 (RSNEKLRLPHNKSDKKS) the composition is skewed to basic and acidic residues. Residues asparagine 414 and asparagine 479 are each glycosylated (N-linked (GlcNAc...) asparagine).

As to expression, component of the acid-insoluble organic matrix of calcified layers of the shell (at protein level).

Its subcellular location is the secreted. In Lottia gigantea (Giant owl limpet), this protein is EGF-like domain-containing protein 2.